The primary structure comprises 124 residues: UPF0337 protein blr1496 (124 aa).

Belongs to the UPF0337 (CsbD) family.

This Bradyrhizobium diazoefficiens (strain JCM 10833 / BCRC 13528 / IAM 13628 / NBRC 14792 / USDA 110) protein is UPF0337 protein blr1496.